The chain runs to 697 residues: Potassium-transporting ATPase ATP-binding subunit (697 aa).

4 consecutive transmembrane segments (helical) span residues 55-75 (PIMF…FLPS), 79-99 (SIPG…VLFA), 245-265 (LTLI…YLGF), and 271-291 (VLVA…LSAI). Residue Asp324 is the 4-aspartylphosphate intermediate of the active site. ATP contacts are provided by residues Asp361, Glu365, 393–400 (FKAETRMS), and Lys412. Mg(2+) contacts are provided by Asp535 and Asp539. The next 3 helical transmembrane spans lie at 605 to 625 (FAII…LNIM), 633 to 653 (AILS…PLAM), and 677 to 697 (GGVI…GLFI).

This sequence belongs to the cation transport ATPase (P-type) (TC 3.A.3) family. Type IA subfamily. As to quaternary structure, the system is composed of three essential subunits: KdpA, KdpB and KdpC.

It localises to the cell membrane. The enzyme catalyses K(+)(out) + ATP + H2O = K(+)(in) + ADP + phosphate + H(+). Its function is as follows. Part of the high-affinity ATP-driven potassium transport (or Kdp) system, which catalyzes the hydrolysis of ATP coupled with the electrogenic transport of potassium into the cytoplasm. This subunit is responsible for energy coupling to the transport system and for the release of the potassium ions to the cytoplasm. The polypeptide is Potassium-transporting ATPase ATP-binding subunit (Bacillus cereus (strain B4264)).